A 723-amino-acid chain; its full sequence is Envelope glycoprotein H (723 aa).

A signal peptide spans 1-23 (MSPATRFTVISCLVVSLITPSET). Topologically, residues 24-700 (SSWFDPFIEW…IIDIRQTSIF (677 aa)) are virion surface. N-linked (GlcNAc...) asparagine; by host glycans are attached at residues Asn-39, Asn-45, Asn-144, and Asn-174. Residues 197–263 (HQFAIVLTFT…QSYRDDLLIV (67 aa)) are interaction with gL. N-linked (GlcNAc...) asparagine; by host glycans are attached at residues Asn-270, Asn-340, Asn-411, Asn-543, Asn-621, and Asn-681. Residues 701-721 (MIMLYCSLGVLLLYGLYRLLH) traverse the membrane as a helical segment. At 722-723 (MI) the chain is on the intravirion side.

This sequence belongs to the herpesviridae glycoprotein H family. In terms of assembly, interacts with glycoprotein L (gL); this interaction is necessary for the correct processing and cell surface expression of gH. The heterodimer gH/gL seems to interact with gB trimers during fusion. In terms of processing, N-glycosylated, O-glycosylated, and sialylated.

It localises to the virion membrane. It is found in the host cell membrane. The protein localises to the host endosome membrane. Functionally, the heterodimer glycoprotein H-glycoprotein L is required for the fusion of viral and plasma membranes leading to virus entry into the host cell. Following initial binding to host receptor, membrane fusion is mediated by the fusion machinery composed of gB and the heterodimer gH/gL. May also be involved in the fusion between the virion envelope and the outer nuclear membrane during virion morphogenesis. The chain is Envelope glycoprotein H from Guinea pig cytomegalovirus (strain 22122) (GPCMV).